Here is a 203-residue protein sequence, read N- to C-terminus: Endo-type membrane-bound lytic murein transglycosylase A (203 aa).

Positions 1-15 (MKLRWFAFLIVLLAG) are cleaved as a signal peptide. A lipid anchor (N-palmitoyl cysteine) is attached at C16. C16 carries the S-diacylglycerol cysteine lipid modification.

Belongs to the transglycosylase Slt family.

It localises to the cell outer membrane. It carries out the reaction Endolytic cleavage of the (1-&gt;4)-beta-glycosidic linkage between N-acetylmuramic acid (MurNAc) and N-acetylglucosamine (GlcNAc) residues in peptidoglycan with concomitant formation of a 1,6-anhydrobond in the MurNAc residue.. In terms of biological role, murein-degrading enzyme. May play a role in recycling of muropeptides during cell elongation and/or cell division. Preferentially cleaves at a distance of more than two disaccharide units from the ends of the glycan chain. The chain is Endo-type membrane-bound lytic murein transglycosylase A from Shigella boydii serotype 4 (strain Sb227).